The chain runs to 328 residues: UPF0421 protein SE_1574 (328 aa).

The next 4 membrane-spanning stretches (helical) occupy residues 26–46 (LFCMLLNLTPIFAILTAIVTI), 61–81 (LPATVIGALFAVVFTYVFGDQ), 109–129 (AVLTSVAMIPSIHEAYVFNFF), and 132–152 (LLTALIGLVTAGLVNFIILPP).

The protein belongs to the UPF0421 family.

It is found in the cell membrane. The protein is UPF0421 protein SE_1574 of Staphylococcus epidermidis (strain ATCC 12228 / FDA PCI 1200).